Here is a 418-residue protein sequence, read N- to C-terminus: Elongation factor 1-gamma 2 (418 aa).

The region spanning 1-82 (MALVLHAGSG…YVTRSKADNP (82 aa)) is the GST N-terminal domain. The GST C-terminal domain maps to 87–215 (SLIEYAHIEQ…VKQAESVPPV (129 aa)). The segment at 210 to 265 (ESVPPVQKKAPPPKEQKPKEAKKEAPKEAPKPKAVEKPEEEEEAPKPKPKNPLDLL) is disordered. A compositionally biased stretch (basic and acidic residues) spans 221–246 (PPKEQKPKEAKKEAPKEAPKPKAVEK). The 161-residue stretch at 258 to 418 (PKNPLDLLPP…ESLLDAKCFK (161 aa)) folds into the EF-1-gamma C-terminal domain.

As to quaternary structure, EF-1 is composed of four subunits: alpha, beta, delta, and gamma.

In terms of biological role, probably plays a role in anchoring the complex to other cellular components. The sequence is that of Elongation factor 1-gamma 2 from Oryza sativa subsp. japonica (Rice).